The chain runs to 326 residues: DNA-directed RNA polymerase subunit alpha (326 aa).

The interval 1-231 (MQTALLKPKI…DQLSVFAALE (231 aa)) is alpha N-terminal domain (alpha-NTD). The tract at residues 247–326 (IDPILLRPVD…ENWPPAGLEK (80 aa)) is alpha C-terminal domain (alpha-CTD).

The protein belongs to the RNA polymerase alpha chain family. In terms of assembly, homodimer. The RNAP catalytic core consists of 2 alpha, 1 beta, 1 beta' and 1 omega subunit. When a sigma factor is associated with the core the holoenzyme is formed, which can initiate transcription.

The catalysed reaction is RNA(n) + a ribonucleoside 5'-triphosphate = RNA(n+1) + diphosphate. In terms of biological role, DNA-dependent RNA polymerase catalyzes the transcription of DNA into RNA using the four ribonucleoside triphosphates as substrates. The polypeptide is DNA-directed RNA polymerase subunit alpha (Cupriavidus metallidurans (strain ATCC 43123 / DSM 2839 / NBRC 102507 / CH34) (Ralstonia metallidurans)).